The chain runs to 286 residues: uncharacterized protein (286 aa).

Positions 1–31 (MKKMSRRQFLKGMFGALAAGALTAGGGYGYA) form a signal peptide, tat-type signal. Residues aspartate 65, histidine 67, aspartate 97, asparagine 130, histidine 221, and histidine 223 each coordinate a divalent metal cation.

It belongs to the metallophosphoesterase superfamily. A divalent metal cation serves as cofactor. Post-translationally, predicted to be exported by the Tat system. The position of the signal peptide cleavage has not been experimentally proven.

This is an uncharacterized protein from Bacillus subtilis (strain 168).